We begin with the raw amino-acid sequence, 195 residues long: Translation machinery-associated protein 22 (195 aa).

Residues 94-165 (VLIKRIERNR…EAKEYIEKLL (72 aa)) enclose the SUI1 domain. Positions 176–195 (EQVDEKKKKKATAPGATPAA) are disordered.

It belongs to the DENR family. Interacts with the 40S ribosomal subunit.

Its subcellular location is the cytoplasm. In Scheffersomyces stipitis (strain ATCC 58785 / CBS 6054 / NBRC 10063 / NRRL Y-11545) (Yeast), this protein is Translation machinery-associated protein 22 (TMA22).